Here is a 188-residue protein sequence, read N- to C-terminus: Cell division protein SepF (188 aa).

The protein belongs to the SepF family. Homodimer. Interacts with FtsZ.

It is found in the cytoplasm. Cell division protein that is part of the divisome complex and is recruited early to the Z-ring. Probably stimulates Z-ring formation, perhaps through the cross-linking of FtsZ protofilaments. Its function overlaps with FtsA. This Synechococcus sp. (strain CC9605) protein is Cell division protein SepF.